The chain runs to 392 residues: Xylose operon regulatory protein (392 aa).

Residues 288 to 386 enclose the HTH araC/xylS-type domain; it reads IQAMHYIRNH…DTTPKEYRDV (99 aa). 2 consecutive DNA-binding regions (H-T-H motif) follow at residues 305–326 and 353–376; these read DQVL…KEEV and INEI…KKAY.

In terms of biological role, regulatory protein for the xylBAFGHR operon. The chain is Xylose operon regulatory protein (xylR) from Escherichia coli O157:H7.